Reading from the N-terminus, the 474-residue chain is tRNA-2-methylthio-N(6)-dimethylallyladenosine synthase (474 aa).

An MTTase N-terminal domain is found at 3 to 120 (KKLHIKTWGC…LPEMINSVRG (118 aa)). Cys-12, Cys-49, Cys-83, Cys-157, Cys-161, and Cys-164 together coordinate [4Fe-4S] cluster. A Radical SAM core domain is found at 143–375 (RAEGPTAFVS…QERINQQAMA (233 aa)). Residues 378–441 (RRMLGTTQRI…PNSLRGKVVR (64 aa)) enclose the TRAM domain.

The protein belongs to the methylthiotransferase family. MiaB subfamily. As to quaternary structure, monomer. Requires [4Fe-4S] cluster as cofactor.

Its subcellular location is the cytoplasm. It carries out the reaction N(6)-dimethylallyladenosine(37) in tRNA + (sulfur carrier)-SH + AH2 + 2 S-adenosyl-L-methionine = 2-methylsulfanyl-N(6)-dimethylallyladenosine(37) in tRNA + (sulfur carrier)-H + 5'-deoxyadenosine + L-methionine + A + S-adenosyl-L-homocysteine + 2 H(+). Functionally, catalyzes the methylthiolation of N6-(dimethylallyl)adenosine (i(6)A), leading to the formation of 2-methylthio-N6-(dimethylallyl)adenosine (ms(2)i(6)A) at position 37 in tRNAs that read codons beginning with uridine. This Shigella boydii serotype 18 (strain CDC 3083-94 / BS512) protein is tRNA-2-methylthio-N(6)-dimethylallyladenosine synthase.